A 144-amino-acid chain; its full sequence is MPCVFCAIIAGEAPAIRIYEDGGYLAILDIRPFTRGHTLVLPKRHTVDLTDTPPEALADMVAIGQRIARAARATKLADATHIAINDGRAAFQTVFHVHLHVLPPRNGDKLSVAKGMMLRRDPDREATGRILREALAQQDAAAQD.

One can recognise an HIT domain in the interval 4 to 111 (VFCAIIAGEA…LPPRNGDKLS (108 aa)). Positions 96–100 (HVHLH) match the Histidine triad motif motif.

This is an uncharacterized protein from Mycobacterium tuberculosis (strain CDC 1551 / Oshkosh).